The chain runs to 333 residues: D-2-hydroxyacid dehydrogenase (NAD+) (333 aa).

Tyrosine 100 contributes to the 4-methyl-2-oxopentanoate binding site. NAD(+) contacts are provided by histidine 155, isoleucine 156, aspartate 175, valine 205, asparagine 211, threonine 232, arginine 234, and aspartate 258. The active site involves arginine 234. Residue glutamate 263 is part of the active site. 4-methyl-2-oxopentanoate is bound at residue histidine 295. The active-site Proton donor is histidine 295.

The protein belongs to the D-isomer specific 2-hydroxyacid dehydrogenase family. In terms of assembly, homodimer.

The enzyme catalyses a (2R)-2-hydroxycarboxylate + NAD(+) = a 2-oxocarboxylate + NADH + H(+). It carries out the reaction (2R)-hydroxy-4-methylpentanoate + NAD(+) = 4-methyl-2-oxopentanoate + NADH + H(+). It catalyses the reaction (R)-3-phenyllactate + NAD(+) = 3-phenylpyruvate + NADH + H(+). With respect to regulation, completely inhibited In the presence of 0.1 mM Hg(2+). No influence on the activity could be detected with Mg(2+) and Ca(2+) and only very weak effects with Cd(2+), Co(2+) and Mn(2+). Reducing agents and thiol group reagents do not affect catalytic activity. Catalyzes the NADH-dependent reversible reduction of various 2-ketocarboxylic acids to the corresponding D-2-hydroxycarboxylic acids. In vitro can use various substrates, including 4-methyl-2-oxopentanoate (2-oxoisocaproate), 2-oxopentanoate, 2-oxohexanoate and phenylpyruvate. This is D-2-hydroxyacid dehydrogenase (NAD+) from Lacticaseibacillus paracasei (Lactobacillus paracasei).